The following is a 270-amino-acid chain: Phospholipase A and acyltransferase 5 (270 aa).

Disordered regions lie at residues 1-54 (MGLS…SASS) and 70-122 (RRLE…NPRP). Polar residues-rich tracts occupy residues 24-54 (TQISKTSSTESSDTQSATGQSTVPHSDSASS) and 100-116 (IPTSNSEIESTQKNQAV). Residues 127-240 (LIEIFRIGYE…LRYGVPRSQQ (114 aa)) form the LRAT domain. Catalysis depends on residues histidine 137 and histidine 149. The Acyl-thioester intermediate role is filled by cysteine 224.

The protein belongs to the H-rev107 family. As to expression, isoform 4 shows highest expression level in testis.

It is found in the cytoplasm. Its subcellular location is the cytosol. It catalyses the reaction a 1,2-diacyl-sn-glycero-3-phosphocholine + H2O = a 1-acyl-sn-glycero-3-phosphocholine + a fatty acid + H(+). It carries out the reaction a 1,2-diacyl-sn-glycero-3-phosphocholine + H2O = a 2-acyl-sn-glycero-3-phosphocholine + a fatty acid + H(+). The enzyme catalyses 1-hexadecanoyl-2-(5Z,8Z,11Z,14Z-eicosatetraenoyl)-sn-glycero-3-phosphocholine + 1,2-di-(9Z-octadecenoyl)-sn-glycero-3-phosphoethanolamine = N-(5Z,8Z,11Z,14Z-eicosatetraenoyl)-1,2-di-(9Z-octadecenoyl)-sn-glycero-3-phosphoethanolamine + 1-hexadecanoyl-sn-glycero-3-phosphocholine + H(+). The catalysed reaction is 1,2-di-(9Z-octadecenoyl)-sn-glycero-3-phosphoethanolamine + 1,2-dihexadecanoyl-sn-glycero-3-phosphocholine = N-hexadecanoyl-1,2-di-(9Z-octadecenoyl)-sn-glycero-3-phosphoethanolamine + 1-hexadecanoyl-sn-glycero-3-phosphocholine + H(+). It catalyses the reaction 1,2-di-(9Z-octadecenoyl)-sn-glycero-3-phosphoethanolamine + 1,2-dihexadecanoyl-sn-glycero-3-phosphocholine = N-hexadecanoyl-1,2-di-(9Z-octadecenoyl)-sn-glycero-3-phosphoethanolamine + 2-hexadecanoyl-sn-glycero-3-phosphocholine + H(+). It carries out the reaction a 1,2-diacyl-sn-glycero-3-phosphoethanolamine + a 1,2-diacyl-sn-glycero-3-phosphocholine = an N-acyl-1,2-diacyl-sn-glycero-3-phosphoethanolamine + a 1-acyl-sn-glycero-3-phosphocholine + H(+). The enzyme catalyses a 1,2-diacyl-sn-glycero-3-phosphoethanolamine + a 1,2-diacyl-sn-glycero-3-phosphocholine = an N-acyl-1,2-diacyl-sn-glycero-3-phosphoethanolamine + a 2-acyl-sn-glycero-3-phosphocholine + H(+). The catalysed reaction is 1-hexadecanoyl-2-(9Z-octadecenoyl)-sn-glycero-3-phosphocholine + 1,2-di-(9Z-octadecenoyl)-sn-glycero-3-phosphoethanolamine = N,1,2-tri-(9Z-octadecenoyl)-sn-glycero-3-phosphoethanolamine + 1-hexadecanoyl-sn-glycero-3-phosphocholine + H(+). In terms of biological role, exhibits both phospholipase A1/2 and acyltransferase activities. Shows phospholipase A1 (PLA1) and A2 (PLA2) activity, catalyzing the calcium-independent release of fatty acids from the sn-1 or sn-2 position of glycerophospholipids. Shows N-acyltransferase activity, catalyzing the calcium-independent transfer of a fatty acyl group at the sn-1 position of phosphatidylcholine (PC) and other glycerophospholipids to the primary amine of phosphatidylethanolamine (PE), forming N-acylphosphatidylethanolamine (NAPE), which serves as precursor for N-acylethanolamines (NAEs). This chain is Phospholipase A and acyltransferase 5, found in Mus musculus (Mouse).